The chain runs to 269 residues: MPELPEVETTLRGIRPHLQGRILKSVTVREPRLRWPVSEAIYALRDCPVVALRRRAKYLLIELEHGQLLIHLGMSGTLRVVDMDLPLRKHDHVDLLLDSGKVLRFNDPRRFGSVLFQGGDQPHSLLQSLGPEPLSDSFNGQWLFARSRGRKVAVKSFIMDNATVVGVGNIYAQESLFMAGIHPSRAAGRISLARYQALAEAIKRVLAQAIEAGGTTLKDFTRADGQPGYFAQSLNVYGRAGQPCVQCDAILKADRHGQRSTAYCPQCQR.

The active-site Schiff-base intermediate with DNA is proline 2. Glutamate 3 functions as the Proton donor in the catalytic mechanism. Lysine 57 acts as the Proton donor; for beta-elimination activity in catalysis. Residues histidine 90, arginine 109, and arginine 150 each coordinate DNA. The FPG-type zinc finger occupies 235–269 (NVYGRAGQPCVQCDAILKADRHGQRSTAYCPQCQR). Arginine 259 (proton donor; for delta-elimination activity) is an active-site residue.

The protein belongs to the FPG family. In terms of assembly, monomer. The cofactor is Zn(2+).

It catalyses the reaction Hydrolysis of DNA containing ring-opened 7-methylguanine residues, releasing 2,6-diamino-4-hydroxy-5-(N-methyl)formamidopyrimidine.. The catalysed reaction is 2'-deoxyribonucleotide-(2'-deoxyribose 5'-phosphate)-2'-deoxyribonucleotide-DNA = a 3'-end 2'-deoxyribonucleotide-(2,3-dehydro-2,3-deoxyribose 5'-phosphate)-DNA + a 5'-end 5'-phospho-2'-deoxyribonucleoside-DNA + H(+). Functionally, involved in base excision repair of DNA damaged by oxidation or by mutagenic agents. Acts as a DNA glycosylase that recognizes and removes damaged bases. Has a preference for oxidized purines, such as 7,8-dihydro-8-oxoguanine (8-oxoG). Has AP (apurinic/apyrimidinic) lyase activity and introduces nicks in the DNA strand. Cleaves the DNA backbone by beta-delta elimination to generate a single-strand break at the site of the removed base with both 3'- and 5'-phosphates. The protein is Formamidopyrimidine-DNA glycosylase of Alcanivorax borkumensis (strain ATCC 700651 / DSM 11573 / NCIMB 13689 / SK2).